We begin with the raw amino-acid sequence, 458 residues long: 5'-adenylylsulfate reductase 3, chloroplastic (458 aa).

The interval 1–24 (MALAINVSSSSSSAISSSSFPSSD) is disordered. A chloroplast-targeting transit peptide spans 1–69 (MALAINVSSS…VQSITKESIV (69 aa)). The segment covering 8 to 23 (SSSSSSAISSSSFPSS) has biased composition (low complexity). A reductase domain region spans residues 70–319 (ASEVTEKLDV…KAKECGLHKG (250 aa)). The Thioredoxin domain occupies 337-458 (ASVADIFNSE…SLTSFLNLVR (122 aa)). Active-site nucleophile residues include Cys378 and Cys381. A disulfide bond links Cys378 and Cys381.

Belongs to the APS reductase family. [4Fe-4S] cluster is required as a cofactor. As to expression, leaves, roots and stem.

It localises to the plastid. The protein resides in the chloroplast. The enzyme catalyses glutathione disulfide + sulfite + AMP + 2 H(+) = adenosine 5'-phosphosulfate + 2 glutathione. Stimulated by sodium sulfate &gt; ammonium sulfate. In terms of biological role, reduces sulfate for Cys biosynthesis. Substrate preference is adenosine-5'-phosphosulfate (APS) &gt;&gt; 3'-phosphoadenosine-5'-phosphosulfate (PAPS). Uses glutathione or DTT as source of protons. The sequence is that of 5'-adenylylsulfate reductase 3, chloroplastic (APR3) from Arabidopsis thaliana (Mouse-ear cress).